We begin with the raw amino-acid sequence, 98 residues long: NADH-ubiquinone oxidoreductase chain 4L (98 aa).

Helical transmembrane passes span 1 to 21 (MTHI…GLTF), 26 to 46 (LLSA…ALAM), and 59 to 79 (APLL…SLLV).

Belongs to the complex I subunit 4L family.

It is found in the mitochondrion membrane. It carries out the reaction a ubiquinone + NADH + 5 H(+)(in) = a ubiquinol + NAD(+) + 4 H(+)(out). Functionally, core subunit of the mitochondrial membrane respiratory chain NADH dehydrogenase (Complex I) which catalyzes electron transfer from NADH through the respiratory chain, using ubiquinone as an electron acceptor. Part of the enzyme membrane arm which is embedded in the lipid bilayer and involved in proton translocation. The chain is NADH-ubiquinone oxidoreductase chain 4L (MT-ND4L) from Polypterus ornatipinnis (Ornate bichir).